Here is a 432-residue protein sequence, read N- to C-terminus: Enolase (432 aa).

Gln167 is a (2R)-2-phosphoglycerate binding site. The active-site Proton donor is the Glu209. Residues Asp246, Glu291, and Asp318 each contribute to the Mg(2+) site. (2R)-2-phosphoglycerate-binding residues include Lys343, Arg372, Ser373, and Lys394. Catalysis depends on Lys343, which acts as the Proton acceptor.

This sequence belongs to the enolase family. Component of the RNA degradosome, a multiprotein complex involved in RNA processing and mRNA degradation. The cofactor is Mg(2+).

Its subcellular location is the cytoplasm. It localises to the secreted. The protein resides in the cell surface. The enzyme catalyses (2R)-2-phosphoglycerate = phosphoenolpyruvate + H2O. It participates in carbohydrate degradation; glycolysis; pyruvate from D-glyceraldehyde 3-phosphate: step 4/5. Its function is as follows. Catalyzes the reversible conversion of 2-phosphoglycerate (2-PG) into phosphoenolpyruvate (PEP). It is essential for the degradation of carbohydrates via glycolysis. This Aliivibrio fischeri (strain MJ11) (Vibrio fischeri) protein is Enolase.